Reading from the N-terminus, the 95-residue chain is NELL2-interacting cell ontogeny regulator 1 (95 aa).

The N-terminal stretch at 1 to 34 (MAPPPACRSPMSPPPPPLLLLLLSLALLGARARA) is a signal peptide.

This sequence belongs to the NICOL family. As to quaternary structure, interacts with NELL2; triggers epididymal differentiation. Interacts with cell surface receptor TFRC; the interaction mediates uptake of NICOL1 into fibroblasts. In terms of tissue distribution, detected in the brain (at protein level). Also expressed at low levels in the kidney, primarily in tubular epithelial cells.

Its subcellular location is the secreted. The protein resides in the cytoplasm. It localises to the perinuclear region. Functionally, mRNA-binding protein which interacts with a range of target mRNAs including SERPINE1, ACTA2, CCN2 and COL4A1 and may promote extracellular matrix production. Binds to the 3'-UTR of SERPINE1 mRNA and stabilizes the mRNA, possibly by competing for binding with SERBP1 and preventing SERBP1-mediated mRNA degradation. Also binds to the 3'-UTR of ACTA2. Testis-derived lumicrine factor that triggers epididymal differentiation and sperm maturation. The polypeptide is NELL2-interacting cell ontogeny regulator 1 (Homo sapiens (Human)).